Here is a 59-residue protein sequence, read N- to C-terminus: UPF0434 protein plu1633 (59 aa).

The protein belongs to the UPF0434 family.

The sequence is that of UPF0434 protein plu1633 from Photorhabdus laumondii subsp. laumondii (strain DSM 15139 / CIP 105565 / TT01) (Photorhabdus luminescens subsp. laumondii).